Consider the following 589-residue polypeptide: Aspartate--tRNA(Asp/Asn) ligase (589 aa).

Glu-172 contributes to the L-aspartate binding site. Positions Gln-196 to Lys-199 are aspartate. Arg-218 contributes to the L-aspartate binding site. ATP contacts are provided by residues Arg-218–Glu-220 and Gln-227. His-449 is a binding site for L-aspartate. Glu-483 contacts ATP. Arg-490 contributes to the L-aspartate binding site. Position 535–538 (Gly-535–Arg-538) interacts with ATP.

Belongs to the class-II aminoacyl-tRNA synthetase family. Type 1 subfamily. In terms of assembly, homodimer.

It is found in the cytoplasm. It catalyses the reaction tRNA(Asx) + L-aspartate + ATP = L-aspartyl-tRNA(Asx) + AMP + diphosphate. In terms of biological role, aspartyl-tRNA synthetase with relaxed tRNA specificity since it is able to aspartylate not only its cognate tRNA(Asp) but also tRNA(Asn). Reaction proceeds in two steps: L-aspartate is first activated by ATP to form Asp-AMP and then transferred to the acceptor end of tRNA(Asp/Asn). The protein is Aspartate--tRNA(Asp/Asn) ligase of Francisella philomiragia subsp. philomiragia (strain ATCC 25017 / CCUG 19701 / FSC 153 / O#319-036).